The chain runs to 197 residues: Protein LURP-one-related 9 (197 aa).

Belongs to the LOR family.

Might be related to the phospholipid scramblase and tubby-like superfamily of membrane tethered transcription factors. The chain is Protein LURP-one-related 9 from Arabidopsis thaliana (Mouse-ear cress).